Consider the following 400-residue polypeptide: Bifunctional arginine demethylase and lysyl-hydroxylase psr-1 (400 aa).

A JmjC domain is found at Arg-146–Arg-310. Substrate is bound at residue Thr-189. Positions 192 and 194 each coordinate Fe cation. Asn-202 is a binding site for 2-oxoglutarate. Lys-209 contributes to the substrate binding site. His-278 contacts Fe cation. Residue Thr-290 participates in 2-oxoglutarate binding. The interval Asp-342 to Val-400 is disordered. Over residues Ser-346–Asp-358 the composition is skewed to low complexity. The span at Lys-378–Glu-388 shows a compositional bias: basic and acidic residues. Polar residues predominate over residues Met-390 to Val-400.

This sequence belongs to the JMJD6 family. Interacts with ced-5 and ced-12. Requires Fe(2+) as cofactor.

It is found in the nucleus. Dioxygenase that can both act as a histone arginine demethylase and a lysyl-hydroxylase. In Caenorhabditis elegans, this protein is Bifunctional arginine demethylase and lysyl-hydroxylase psr-1 (psr-1).